A 351-amino-acid polypeptide reads, in one-letter code: uncharacterized protein (351 aa).

Mn(2+) contacts are provided by aspartate 215, aspartate 226, histidine 290, glutamate 319, and glutamate 333.

It belongs to the peptidase M24B family. It depends on Mn(2+) as a cofactor.

This is an uncharacterized protein from Staphylococcus epidermidis (strain ATCC 35984 / DSM 28319 / BCRC 17069 / CCUG 31568 / BM 3577 / RP62A).